A 288-amino-acid chain; its full sequence is Syntaxin-1A (288 aa).

A compositionally biased stretch (basic and acidic residues) spans 1–13; it reads MKDRTQELRTAKD. The tract at residues 1 to 20 is disordered; it reads MKDRTQELRTAKDSDDDDDV. Over 1–265 the chain is Cytoplasmic; that stretch reads MKDRTQELRT…KYQSKARRKK (265 aa). Residues Ser14, Ser64, and Ser95 each carry the phosphoserine modification. Positions 68 to 109 form a coiled coil; sequence DEKTKEELEELMSDIKKTANKVRSKLKSIEQSIEQEEGLNRS. The residue at position 188 (Ser188) is a Phosphoserine; by DAPK1. Positions 192-254 constitute a t-SNARE coiled-coil homology domain; sequence LSEIETRHSE…ERAVSDTKKA (63 aa). Glycyl lysine isopeptide (Lys-Gly) (interchain with G-Cter in SUMO) cross-links involve residues Lys252, Lys253, and Lys256. A helical; Anchor for type IV membrane protein membrane pass occupies residues 266-288; sequence IMIVICCVVLGIVIASTFGGIFG.

It belongs to the syntaxin family. In terms of assembly, part of the SNARE core complex containing SNAP25, VAMP2 and STX1A; this complex constitutes the basic catalytic machinery of the complex neurotransmitter release apparatus. The SNARE complex interacts with CPLX1. Interacts with STXBP1. The interaction with STXBP1 promotes assembly of the SNARE complex. Interacts (via C-terminus) with KCNB1 (via C-terminus); the interaction increases in a calcium-dependent manner and induces a pore-independent enhancement of exocytosis in neuroendocrine cells, chromaffin cells, pancreatic beta cells and from the soma of dorsal root ganglia (DRG) neurons. Interacts with SYTL4. Interacts with STXBP6. Interacts with PLCL1 (via C2 domain). Interacts with OTOF. Interacts with LGI3. Interacts (via the H3 domain) with SLC6A4 (via the N-terminus); this interaction regulates SLC4A6 channel conductance in thalamocortical neurons. Interacts with SYT6 and SYT8; the interaction is Ca(2+)-dependent. Interacts with VAMP8. Interacts with SNAP23. Interacts with VAPA and SYBU. Interacts with PRRT2. Interacts with SEPT8. Interacts with STXBP5L. Interacts with synaptotagmin-1/SYT1. Interacts with SEPTIN5; in the cerebellar cortex. Interacts with SEPTIN4; in the striatum. Post-translationally, phosphorylated by CK2. Phosphorylation at Ser-188 by DAPK1 significantly decreases its interaction with STXBP1. Sumoylated, sumoylation is required for regulation of synaptic vesicle endocytosis. In terms of processing, (Microbial infection) Targeted and hydrolyzed by C.botulinum neurotoxin type C (BoNT/C) which inhibits neurotransmitter release. Probably hydrolyzes the 253-Lys-|-Ala-254 bond.

It is found in the cytoplasmic vesicle. Its subcellular location is the secretory vesicle. The protein resides in the synaptic vesicle membrane. It localises to the synapse. The protein localises to the synaptosome. It is found in the cell membrane. Functionally, plays an essential role in hormone and neurotransmitter calcium-dependent exocytosis and endocytosis. Part of the SNARE (Soluble NSF Attachment Receptor) complex composed of SNAP25, STX1A and VAMP2 which mediates the fusion of synaptic vesicles with the presynaptic plasma membrane. STX1A and SNAP25 are localized on the plasma membrane while VAMP2 resides in synaptic vesicles. The pairing of the three SNAREs from the N-terminal SNARE motifs to the C-terminal anchors leads to the formation of the SNARE complex, which brings membranes into close proximity and results in final fusion. Participates in the calcium-dependent regulation of acrosomal exocytosis in sperm. Also plays an important role in the exocytosis of hormones such as insulin or glucagon-like peptide 1 (GLP-1). The protein is Syntaxin-1A (STX1A) of Bos taurus (Bovine).